The chain runs to 883 residues: Phosphoenolpyruvate carboxylase (883 aa).

Residues histidine 138 and lysine 546 contribute to the active site.

The protein belongs to the PEPCase type 1 family. The cofactor is Mg(2+).

The enzyme catalyses oxaloacetate + phosphate = phosphoenolpyruvate + hydrogencarbonate. Functionally, forms oxaloacetate, a four-carbon dicarboxylic acid source for the tricarboxylic acid cycle. This is Phosphoenolpyruvate carboxylase from Enterobacter sp. (strain 638).